Here is a 223-residue protein sequence, read N- to C-terminus: Probable glutathione S-transferase (223 aa).

A GST N-terminal domain is found at 2–81; that stretch reads AEVKLLGFWY…YIDETFEGPS (80 aa). Residues Ser-12, Lys-39, Val-53, and 65–66 each bind glutathione; that span reads ES. The region spanning 86–212 is the GST C-terminal domain; it reads DPYDRALARF…ELLAFFRARF (127 aa).

The protein belongs to the GST superfamily. HSP26 family. As to expression, root tip-specific expression.

It catalyses the reaction RX + glutathione = an S-substituted glutathione + a halide anion + H(+). The sequence is that of Probable glutathione S-transferase from Nicotiana tabacum (Common tobacco).